The chain runs to 91 residues: Small ribosomal subunit protein bS16 (91 aa).

Belongs to the bacterial ribosomal protein bS16 family.

The protein is Small ribosomal subunit protein bS16 of Streptococcus mutans serotype c (strain ATCC 700610 / UA159).